Consider the following 279-residue polypeptide: Zinc-finger homeodomain protein 1 (279 aa).

Residues 1–30 (MEFEDNNNNNDEEQEEDMNLHEEEEDDDAV) are compositionally biased toward acidic residues. Positions 1 to 62 (MEFEDNNNNN…TTSTGGGGGF (62 aa)) are disordered. A ZF-HD dimerization-type zinc finger spans residues 75-124 (FRECLKNQAVNIGGHAVDGCGEFMPAGIEGTIDALKCAACGCHRNFHRKE). 2 disordered regions span residues 128–199 (FHHA…TKFT) and 245–279 (NNKH…QDQP). A compositionally biased stretch (pro residues) spans 134 to 143 (QHQPPPPPPG). The segment at residues 191-254 (RKRHRTKFTA…NNKHTLGKSP (64 aa)) is a DNA-binding region (homeobox; atypical).

As to quaternary structure, homo- and heterodimer with other ZFHD proteins. Interacts with MIF1 and MIF2; these interactions prevent nuclear localization and DNA-binding to inhibit transcription regulation activity. Binds to ZHD2, ZHD3, ZHD4, ZHD5, ZHD6, ZHD7, ZHD8, ZHD9, ZHD10 and ZHD11. As to expression, mostly expressed in flowers and inflorescence.

The protein localises to the nucleus. Putative transcription factor. The polypeptide is Zinc-finger homeodomain protein 1 (ZHD1) (Arabidopsis thaliana (Mouse-ear cress)).